Reading from the N-terminus, the 160-residue chain is Ureidoglycolate lyase (160 aa).

The protein belongs to the ureidoglycolate lyase family. In terms of assembly, homodimer. It depends on Ni(2+) as a cofactor.

The catalysed reaction is (S)-ureidoglycolate = urea + glyoxylate. Its pathway is nitrogen metabolism; (S)-allantoin degradation. Its function is as follows. Catalyzes the catabolism of the allantoin degradation intermediate (S)-ureidoglycolate, generating urea and glyoxylate. Involved in the anaerobic utilization of allantoin as sole nitrogen source. Reinforces the induction of genes involved in the degradation of allantoin and glyoxylate by producing glyoxylate. The chain is Ureidoglycolate lyase from Escherichia coli (strain SMS-3-5 / SECEC).